The sequence spans 129 residues: Holo-[acyl-carrier-protein] synthase (129 aa).

Mg(2+) is bound by residues Asp-8 and Glu-60.

This sequence belongs to the P-Pant transferase superfamily. AcpS family. Requires Mg(2+) as cofactor.

It is found in the cytoplasm. It catalyses the reaction apo-[ACP] + CoA = holo-[ACP] + adenosine 3',5'-bisphosphate + H(+). Functionally, transfers the 4'-phosphopantetheine moiety from coenzyme A to a Ser of acyl-carrier-protein. The protein is Holo-[acyl-carrier-protein] synthase of Anaeromyxobacter sp. (strain Fw109-5).